A 203-amino-acid chain; its full sequence is Microtubule-associated protein Jupiter (203 aa).

Ser-30 bears the Phosphoserine mark. Phosphothreonine occurs at positions 41 and 102. Polar residues predominate over residues 123 to 132; it reads LISKGNYNGK. Disordered regions lie at residues 123–163 and 182–203; these read LISK…GNPV and NGGS…SGLW. Low complexity predominate over residues 133–146; that stretch reads SGSVSSASSSVSSS. Phosphoserine is present on residues Ser-135 and Ser-146.

It belongs to the MAP Jupiter family.

Its subcellular location is the nucleus. The protein resides in the cytoplasm. The protein localises to the cytoskeleton. It localises to the spindle. In terms of biological role, binds to all microtubule populations. In Drosophila mojavensis (Fruit fly), this protein is Microtubule-associated protein Jupiter.